Consider the following 148-residue polypeptide: Large ribosomal subunit protein bL9 (148 aa).

The protein belongs to the bacterial ribosomal protein bL9 family.

Binds to the 23S rRNA. The protein is Large ribosomal subunit protein bL9 of Streptomyces griseus subsp. griseus (strain JCM 4626 / CBS 651.72 / NBRC 13350 / KCC S-0626 / ISP 5235).